We begin with the raw amino-acid sequence, 510 residues long: Ferredoxin--nitrite reductase (510 aa).

4 residues coordinate [4Fe-4S] cluster: Cys-396, Cys-402, Cys-437, and Cys-441. Residue Cys-441 coordinates siroheme.

The protein belongs to the nitrite and sulfite reductase 4Fe-4S domain family.

The enzyme catalyses 6 oxidized [2Fe-2S]-[ferredoxin] + NH4(+) + 2 H2O = nitrite + 6 reduced [2Fe-2S]-[ferredoxin] + 8 H(+). In Leptolyngbya laminosa (Phormidium laminosum), this protein is Ferredoxin--nitrite reductase (nirA).